We begin with the raw amino-acid sequence, 407 residues long: Argininosuccinate synthase (407 aa).

ATP is bound by residues 10–18 and A37; that span reads AYSGGLDTS. Residues Y88 and S93 each coordinate L-citrulline. G118 lines the ATP pocket. L-aspartate is bound by residues T120, N124, and D125. Residue N124 coordinates L-citrulline. L-citrulline-binding residues include R128, S180, S189, E265, and Y277.

The protein belongs to the argininosuccinate synthase family. Type 1 subfamily. In terms of assembly, homotetramer.

It localises to the cytoplasm. The enzyme catalyses L-citrulline + L-aspartate + ATP = 2-(N(omega)-L-arginino)succinate + AMP + diphosphate + H(+). It participates in amino-acid biosynthesis; L-arginine biosynthesis; L-arginine from L-ornithine and carbamoyl phosphate: step 2/3. The chain is Argininosuccinate synthase from Alcanivorax borkumensis (strain ATCC 700651 / DSM 11573 / NCIMB 13689 / SK2).